Consider the following 513-residue polypeptide: Glycerol-3-phosphate dehydrogenase (513 aa).

16 to 44 lines the FAD pocket; sequence DVAVIGGGINGVGIAADAAGRGLSVFLCE.

The protein belongs to the FAD-dependent glycerol-3-phosphate dehydrogenase family. FAD serves as cofactor.

The protein resides in the cytoplasm. It catalyses the reaction a quinone + sn-glycerol 3-phosphate = dihydroxyacetone phosphate + a quinol. The polypeptide is Glycerol-3-phosphate dehydrogenase (glpD) (Pseudomonas tolaasii).